Here is a 237-residue protein sequence, read N- to C-terminus: Mitochondrial inner membrane protease atp23 (237 aa).

The span at 1–13 shows a compositional bias: polar residues; sequence MSDSQPCSTPSTR. Residues 1–23 form a disordered region; that stretch reads MSDSQPCSTPSTRGKSDSGYIPG. H136 serves as a coordination point for a divalent metal cation. The active site involves E137. H140 is a binding site for a divalent metal cation.

The protein belongs to the peptidase M76 family.

It is found in the mitochondrion inner membrane. Functionally, has a dual role in the assembly of mitochondrial ATPase. Acts as a protease that removes N-terminal residues of mitochondrial ATPase CF(0) subunit 6 at the intermembrane space side. Also involved in the correct assembly of the membrane-embedded ATPase CF(0) particle, probably mediating association of subunit 6 with the subunit 9 ring. The polypeptide is Mitochondrial inner membrane protease atp23 (atp23) (Aspergillus fumigatus (strain ATCC MYA-4609 / CBS 101355 / FGSC A1100 / Af293) (Neosartorya fumigata)).